A 370-amino-acid polypeptide reads, in one-letter code: uncharacterized protein (370 aa).

A divalent metal cation-binding residues include Asp-152, His-154, Asp-184, Asn-215, His-306, and His-308.

Belongs to the metallophosphoesterase superfamily. It depends on a divalent metal cation as a cofactor.

This is an uncharacterized protein from Helicobacter pylori (strain ATCC 700392 / 26695) (Campylobacter pylori).